Here is a 92-residue protein sequence, read N- to C-terminus: Cell division protein FtsB (92 aa).

At 1–3 (MKV) the chain is on the cytoplasmic side. The chain crosses the membrane as a helical span at residues 4 to 21 (VPILLFVLLAALQYRLWF). Residues 22-92 (GKNSIPEYVA…TFYRILPSEE (71 aa)) lie on the Periplasmic side of the membrane. A coiled-coil region spans residues 31-74 (AMEKSVAEQAEQNTELLQRNNLLKADIQDLKVGLEAVEERARNE).

This sequence belongs to the FtsB family. Part of a complex composed of FtsB, FtsL and FtsQ.

It is found in the cell inner membrane. In terms of biological role, essential cell division protein. May link together the upstream cell division proteins, which are predominantly cytoplasmic, with the downstream cell division proteins, which are predominantly periplasmic. The polypeptide is Cell division protein FtsB (Pseudoalteromonas atlantica (strain T6c / ATCC BAA-1087)).